We begin with the raw amino-acid sequence, 333 residues long: Eukaryotic translation initiation factor 2 subunit 2 (333 aa).

2 disordered regions span residues 1-119 (MSGD…DLDI) and 139-164 (ILEK…NQTG). Ser-2 is subject to N-acetylserine. Ser-2 and Ser-13 each carry phosphoserine. Residues 13-22 (SKKKKKKKKP) show a composition bias toward basic residues. Residues Thr-31 and Thr-36 each carry the phosphothreonine modification. Positions 40–51 (ETKEVEPEPTED) are enriched in basic and acidic residues. The residue at position 67 (Ser-67) is a Phosphoserine. The segment covering 96–105 (EGVKDLKIES) has biased composition (basic and acidic residues). Lys-102 participates in a covalent cross-link: Glycyl lysine isopeptide (Lys-Gly) (interchain with G-Cter in SUMO2). Residue Ser-105 is modified to Phosphoserine. Composition is skewed to acidic residues over residues 106 to 118 (DVQE…DDLD) and 139 to 149 (ILEKDEALEDE). Phosphothreonine is present on Thr-111. A phosphoserine mark is found at Ser-158 and Ser-218. Lys-265 and Lys-293 each carry N6-acetyllysine. Residues 281–305 (CHTCRSPDTILQKDTRLYFLQCETC) form a C4-type zinc finger.

The protein belongs to the eIF-2-beta/eIF-5 family. Eukaryotic translation initiation factor 2 eIF2 is a heterotrimeric complex composed of an alpha (EIF2S1), a beta (EIF2S2) and a gamma (EIF2S3) chain. eIF2 is member of the 43S pre-initiation complex (43S PIC). eIF2 forms a complex with at least CELF1/CUGBP1, CALR, CALR3, EIF2S1, EIF2S2, HSP90B1 and HSPA5. Interacts with BZW2/5MP1. Interacts with EIF5.

The protein resides in the cytoplasm. It localises to the cytosol. Its function is as follows. Component of the eIF2 complex that functions in the early steps of protein synthesis by forming a ternary complex with GTP and initiator tRNA. This complex binds to a 40S ribosomal subunit, followed by mRNA binding to form the 43S pre-initiation complex (43S PIC). Junction of the 60S ribosomal subunit to form the 80S initiation complex is preceded by hydrolysis of the GTP bound to eIF2 and release of an eIF2-GDP binary complex. In order for eIF2 to recycle and catalyze another round of initiation, the GDP bound to eIF2 must exchange with GTP by way of a reaction catalyzed by eIF2B. The polypeptide is Eukaryotic translation initiation factor 2 subunit 2 (EIF2S2) (Pongo abelii (Sumatran orangutan)).